The following is a 519-amino-acid chain: Probable DNA ligase (519 aa).

Glu221 is an ATP binding site. Lys223 acts as the N6-AMP-lysine intermediate in catalysis. ATP contacts are provided by Arg228, Arg243, Glu272, Phe312, Arg384, and Lys390.

Belongs to the ATP-dependent DNA ligase family. Mg(2+) serves as cofactor.

It catalyses the reaction ATP + (deoxyribonucleotide)n-3'-hydroxyl + 5'-phospho-(deoxyribonucleotide)m = (deoxyribonucleotide)n+m + AMP + diphosphate.. DNA ligase that seals nicks in double-stranded DNA during DNA replication, DNA recombination and DNA repair. This Mycolicibacterium paratuberculosis (strain ATCC BAA-968 / K-10) (Mycobacterium paratuberculosis) protein is Probable DNA ligase.